The following is a 396-amino-acid chain: Elongation factor Tu (396 aa).

A tr-type G domain is found at 10–206; the sequence is KPHVNVGTIG…ALDSFIPEPT (197 aa). Residues 19 to 26 are G1; that stretch reads GHVDHGKT. GTP is bound at residue 19–26; sequence GHVDHGKT. Residue Thr-26 coordinates Mg(2+). The interval 60 to 64 is G2; it reads GITIS. The segment at 81-84 is G3; sequence DCPG. Residues 81 to 85 and 136 to 139 contribute to the GTP site; these read DCPGH and NKAD. The G4 stretch occupies residues 136–139; it reads NKAD. Positions 174 to 176 are G5; the sequence is SAR.

Belongs to the TRAFAC class translation factor GTPase superfamily. Classic translation factor GTPase family. EF-Tu/EF-1A subfamily. In terms of assembly, monomer.

The protein localises to the cytoplasm. The enzyme catalyses GTP + H2O = GDP + phosphate + H(+). In terms of biological role, GTP hydrolase that promotes the GTP-dependent binding of aminoacyl-tRNA to the A-site of ribosomes during protein biosynthesis. The protein is Elongation factor Tu of Xanthomonas euvesicatoria pv. vesicatoria (strain 85-10) (Xanthomonas campestris pv. vesicatoria).